Here is a 395-residue protein sequence, read N- to C-terminus: Acetylornithine aminotransferase (395 aa).

Residues 117–118 (GA) and Phe144 each bind pyridoxal 5'-phosphate. N(2)-acetyl-L-ornithine is bound at residue Arg147. 230–233 (DEVQ) provides a ligand contact to pyridoxal 5'-phosphate. Lys259 is modified (N6-(pyridoxal phosphate)lysine). Ser285 is a binding site for N(2)-acetyl-L-ornithine. Pyridoxal 5'-phosphate is bound at residue Thr286.

Belongs to the class-III pyridoxal-phosphate-dependent aminotransferase family. ArgD subfamily. As to quaternary structure, homodimer. It depends on pyridoxal 5'-phosphate as a cofactor.

It localises to the cytoplasm. It catalyses the reaction N(2)-acetyl-L-ornithine + 2-oxoglutarate = N-acetyl-L-glutamate 5-semialdehyde + L-glutamate. The protein operates within amino-acid biosynthesis; L-arginine biosynthesis; N(2)-acetyl-L-ornithine from L-glutamate: step 4/4. The protein is Acetylornithine aminotransferase of Methanosarcina acetivorans (strain ATCC 35395 / DSM 2834 / JCM 12185 / C2A).